We begin with the raw amino-acid sequence, 1175 residues long: 1-phosphatidylinositol 4,5-bisphosphate phosphodiesterase beta-4 (1175 aa).

N-acetylalanine is present on A2. A PI-PLC X-box domain is found at Q313–K463. Residues H328 and H375 contribute to the active site. The disordered stretch occupies residues E482–H511. Positions L493–E508 are enriched in acidic residues. The PI-PLC Y-box domain maps to L565–R681. Positions D684–L809 constitute a C2 domain. 2 disordered regions span residues A863–P895 and K1082–L1110. Composition is skewed to polar residues over residues A881–P895 and M1085–D1094. The residue at position 886 (T886) is a Phosphothreonine. Residues K1095–E1109 are compositionally biased toward basic and acidic residues.

Ca(2+) serves as cofactor. As to expression, preferentially expressed in the retina.

The protein localises to the cell membrane. The catalysed reaction is a 1,2-diacyl-sn-glycero-3-phospho-(1D-myo-inositol-4,5-bisphosphate) + H2O = 1D-myo-inositol 1,4,5-trisphosphate + a 1,2-diacyl-sn-glycerol + H(+). It carries out the reaction a 1,2-diacyl-sn-glycero-3-phospho-(1D-myo-inositol) + H2O = 1D-myo-inositol 1-phosphate + a 1,2-diacyl-sn-glycerol + H(+). Its function is as follows. Activated phosphatidylinositol-specific phospholipase C enzymes catalyze the production of the second messenger molecules diacylglycerol (DAG) and inositol 1,4,5-trisphosphate (IP3) involved in G-protein coupled receptor signaling pathways. PLCB4 is a direct effector of the endothelin receptor signaling pathway that plays an essential role in lower jaw and middle ear structures development. The polypeptide is 1-phosphatidylinositol 4,5-bisphosphate phosphodiesterase beta-4 (Homo sapiens (Human)).